The sequence spans 98 residues: Large ribosomal subunit protein uL23 (98 aa).

It belongs to the universal ribosomal protein uL23 family. In terms of assembly, part of the 50S ribosomal subunit. Contacts protein L29, and trigger factor when it is bound to the ribosome.

One of the early assembly proteins it binds 23S rRNA. One of the proteins that surrounds the polypeptide exit tunnel on the outside of the ribosome. Forms the main docking site for trigger factor binding to the ribosome. This Borrelia garinii subsp. bavariensis (strain ATCC BAA-2496 / DSM 23469 / PBi) (Borreliella bavariensis) protein is Large ribosomal subunit protein uL23.